We begin with the raw amino-acid sequence, 362 residues long: B3 domain-containing protein IDEF1 (362 aa).

The disordered stretch occupies residues 30–91; it reads VPFPNPFPAP…TPTPTPRGFA (62 aa). The span at 48–70 shows a compositional bias: basic residues; sequence PHNHNHNHNHNHNIHNSHNHNHN. Positions 253–355 form a DNA-binding region, TF-B3; it reads LRKELTKSDV…KFIIRGEKAI (103 aa).

Post-translationally, polyubiquitinated. Ubiquitination leads to its subsequent degradation via the proteasome pathway. As to expression, expressed in roots.

It is found in the nucleus. In terms of biological role, transcription regulator involved in iron deficiency response and tolerance. May regulate directly iron transporters or other transcription factors involved in iron-deficiency response. Binds specifically to the DNA sequence 5'-CATGC-3' of the IDE1 element found in the promoter of the barley iron deficiency-inducible gene IDS2. This chain is B3 domain-containing protein IDEF1 (IDEF1), found in Oryza sativa subsp. japonica (Rice).